The chain runs to 294 residues: Shikimate kinase (294 aa).

Residue proline 87–alanine 97 participates in ATP binding.

It belongs to the GHMP kinase family. Archaeal shikimate kinase subfamily.

Its subcellular location is the cytoplasm. The enzyme catalyses shikimate + ATP = 3-phosphoshikimate + ADP + H(+). Its pathway is metabolic intermediate biosynthesis; chorismate biosynthesis; chorismate from D-erythrose 4-phosphate and phosphoenolpyruvate: step 5/7. This chain is Shikimate kinase (aroK), found in Methanosarcina acetivorans (strain ATCC 35395 / DSM 2834 / JCM 12185 / C2A).